A 406-amino-acid chain; its full sequence is Prisilkin-39 (406 aa).

The first 19 residues, 1 to 19, serve as a signal peptide directing secretion; it reads MKGFLTLLLVCAILSTGYC. The next 2 helical transmembrane spans lie at 26 to 48 and 58 to 80; these read ALTG…GAGA and VGVG…YGGY. Residues 78–197 are 10 X 12 AA tandem repeat of G-G-Y-[SG]-G-Y-[GS]-Y-G-Y-P-[AT]; it reads GGYSGYGYGY…YSGYSYGYPT (120 aa).

In terms of tissue distribution, expression is confined to the prism and organic layers of the shell with no expression detected in the nacreous shell layer. Also expressed in the mantle edge, extrapallial fluid, hemolymph and, to a lesser extent, in the viscus (at protein level). In the mantle, localizes to inner epithelial cells of the outer fold and the outer epithelial cells of the middle fold at the bottom of the periostracal groove.

Its subcellular location is the membrane. In terms of biological role, binds chitin and may serve as a framework constituent participating in shell formation. Inhibits aragonite precipitation and may regulate aragonite growth during shell layer formation. Does not affect calcite crystallization. This Pinctada fucata (Akoya pearl oyster) protein is Prisilkin-39.